Reading from the N-terminus, the 318-residue chain is Dimethyladenosine transferase (318 aa).

Residues His-37, Leu-39, Gly-64, Glu-85, Asp-113, and Asn-128 each coordinate S-adenosyl-L-methionine.

This sequence belongs to the class I-like SAM-binding methyltransferase superfamily. rRNA adenine N(6)-methyltransferase family.

The protein localises to the cytoplasm. It is found in the nucleus. It localises to the nucleolus. It catalyses the reaction adenosine(1779)/adenosine(1780) in 18S rRNA + 4 S-adenosyl-L-methionine = N(6)-dimethyladenosine(1779)/N(6)-dimethyladenosine(1780) in 18S rRNA + 4 S-adenosyl-L-homocysteine + 4 H(+). Its function is as follows. Specifically dimethylates two adjacent adenosines in the loop of a conserved hairpin near the 3'-end of 18S rRNA in the 40S particle. The sequence is that of Dimethyladenosine transferase from Saccharomyces cerevisiae (strain ATCC 204508 / S288c) (Baker's yeast).